The chain runs to 204 residues: Inositol diphosphatase DSP5 (204 aa).

In terms of domain architecture, Tyrosine-protein phosphatase spans 19-168 (NFSMVEDEIY…FDVLRLKQCL (150 aa)). The tract at residues 75 to 87 (FGIEGKTDPPTPM) is WPD loop important for active site topology. Cys-111 functions as the Phosphocysteine intermediate in the catalytic mechanism.

Belongs to the protein-tyrosine phosphatase family. Atypical dual-specificity phosphatase Siw14-like subfamily. Highly expressed in flowers. Expressed at low levels in roots, leaves, stems and siliques.

It catalyses the reaction 5-diphospho-1D-myo-inositol 1,2,3,4,6-pentakisphosphate + H2O = 1D-myo-inositol hexakisphosphate + phosphate + H(+). The catalysed reaction is 1,5-bis(diphospho)-1D-myo-inositol 2,3,4,6-tetrakisphosphate + H2O = 1-diphospho-1D-myo-inositol 2,3,4,5,6-pentakisphosphate + phosphate + 2 H(+). The enzyme catalyses 3,5-bis(diphospho)-1D-myo-inositol 1,2,4,6-tetrakisphosphate + H2O = 3-diphospho-1D-myo-inositol 1,2,4,5,6-pentakisphosphate + phosphate + 2 H(+). It carries out the reaction 6-diphospho-1D-myo-inositol pentakisphosphate + H2O = 1D-myo-inositol hexakisphosphate + phosphate + H(+). Functionally, cleaves the beta-phosphate at the 5-position of soluble inositol pyrophosphates. Has highest activity on 5-diphosphoinositol 1,2,3,4,6-pentakisphosphate (5-InsP(7)). Possesses low phosphotyrosine phosphatase activity in vitro. Dephosphorylates the phosphoinositides PI(3,5)P2. Hydrolyzes O-methylfluorescein phosphate in vitro. This chain is Inositol diphosphatase DSP5, found in Arabidopsis thaliana (Mouse-ear cress).